Reading from the N-terminus, the 940-residue chain is Valine--tRNA ligase (940 aa).

The 'HIGH' region signature appears at 47–57 (PNVTGILHMGH). The short motif at 564–568 (KLSKS) is the 'KMSKS' region element. Lysine 567 contacts ATP. The stretch at 873 to 937 (VEHIAKEKTR…ELQSILDKLA (65 aa)) forms a coiled coil.

This sequence belongs to the class-I aminoacyl-tRNA synthetase family. ValS type 1 subfamily. In terms of assembly, monomer.

The protein resides in the cytoplasm. The enzyme catalyses tRNA(Val) + L-valine + ATP = L-valyl-tRNA(Val) + AMP + diphosphate. Catalyzes the attachment of valine to tRNA(Val). As ValRS can inadvertently accommodate and process structurally similar amino acids such as threonine, to avoid such errors, it has a 'posttransfer' editing activity that hydrolyzes mischarged Thr-tRNA(Val) in a tRNA-dependent manner. The sequence is that of Valine--tRNA ligase from Chlamydia abortus (strain DSM 27085 / S26/3) (Chlamydophila abortus).